Reading from the N-terminus, the 266-residue chain is Hydroxyethylthiazole kinase (266 aa).

Residue methionine 41 participates in substrate binding. 2 residues coordinate ATP: arginine 117 and serine 163. Alanine 190 lines the substrate pocket.

This sequence belongs to the Thz kinase family. Requires Mg(2+) as cofactor.

The enzyme catalyses 5-(2-hydroxyethyl)-4-methylthiazole + ATP = 4-methyl-5-(2-phosphooxyethyl)-thiazole + ADP + H(+). The protein operates within cofactor biosynthesis; thiamine diphosphate biosynthesis; 4-methyl-5-(2-phosphoethyl)-thiazole from 5-(2-hydroxyethyl)-4-methylthiazole: step 1/1. Functionally, catalyzes the phosphorylation of the hydroxyl group of 4-methyl-5-beta-hydroxyethylthiazole (THZ). The sequence is that of Hydroxyethylthiazole kinase from Histophilus somni (strain 129Pt) (Haemophilus somnus).